Here is a 480-residue protein sequence, read N- to C-terminus: RNA-splicing ligase RtcB homolog (480 aa).

Residues Asp93, Cys96, His202, His234, and His328 each coordinate Mn(2+). 201 to 205 (NHYTE) is a binding site for GMP. GMP-binding positions include 328 to 329 (HN), 377 to 380 (GGTM), Ser384, 403 to 406 (HGAG), and Lys479. His403 functions as the GMP-histidine intermediate in the catalytic mechanism.

Belongs to the RtcB family. As to quaternary structure, catalytic component of the tRNA-splicing ligase complex. Mn(2+) serves as cofactor.

It carries out the reaction a 3'-end 3'-phospho-ribonucleotide-RNA + a 5'-end dephospho-ribonucleoside-RNA + GTP = a ribonucleotidyl-ribonucleotide-RNA + GMP + diphosphate. The enzyme catalyses a 3'-end 2',3'-cyclophospho-ribonucleotide-RNA + a 5'-end dephospho-ribonucleoside-RNA + GTP + H2O = a ribonucleotidyl-ribonucleotide-RNA + GMP + diphosphate + H(+). Functionally, catalytic subunit of the tRNA-splicing ligase complex that acts by directly joining spliced tRNA halves to mature-sized tRNAs by incorporating the precursor-derived splice junction phosphate into the mature tRNA as a canonical 3',5'-phosphodiester. May act as an RNA ligase with broad substrate specificity, and may function toward other RNAs. The sequence is that of RNA-splicing ligase RtcB homolog from Thalassiosira pseudonana (Marine diatom).